The primary structure comprises 929 residues: MTDYSKTVNLLESPFPMRGNLAKREPAWLKSWYEQKRYQKLREIAKGRPKFILHDGPPYANGDIHIGHAVNKILKDIIIRSKTQAGFDAPYVPGWDCHGLPIEVMVEKLHGKDMPKARFRELCREYAAEQVACQKKDFIRLGVLGDWDKPYLTMDFKTEADTVRMLGEIYKSGYLYRGAKPVQFCLDCGSSLAEAEVEYKDKVSPAIDVGYPFKDTAALAAAFGLAGIEGKAFAVIWTTTPWTLPASQAVSAGADVVYQLIDTPKGKLVLAKDLAEDALKRYGFSDGIAILAETTGDKLENLHMNHPFLERDIPMLNGDHVTTDAGTGLVHTAPAHGLEDYAVCNKYGIELYNPVNAEGKYISETPRVAGMSVWEANPVILQWLEETGNLLASSKIEHSYAHCWRHKTPLIYRATGQWFVGMDKAGADGKTLRDKAIKAVDDTEFFPSWGRARLEAMIEGRPDWVVSRQRYWGTPMTFFVHKETGELHPNSAELLEKVAQRIEEKGIEAWFSLDKGELLSAEDCEHYDKLSDTMDVWFDSGSTHYSVVKQREELDWPADLYLEGSDQHRGWFQSSMLTGCASSMGRAPYKQLLTHGFVVDQNGRKMSKSIGNVVAPQEVYNEFGADILRLWAASTDYSGELAISKEILKRVTESYRRIRNTLSFLFANLSDFNPIEDAVQQADMVEIDRYAVVLARQLQERLAGDYYPRYTFHFAVKDIVSFCSEDLGAFYLDILKDRLYTTKADSRARRSAQTALYHITRSLVLLIAPILCFTGEEAWDIIGGGEEDSVLFHTWHEFPTINEKAEAELVKKWTAIREAREAVTAAIEPLRADKTVGSSLQAEAEITAPEEMAGYLNALGEELRFALLVSKAEVKVGSELAVAAKASDGEKCERCWHYTRDVGAVAGYETVCKRCAENVGREGETRHYA.

The short motif at 58-68 is the 'HIGH' region element; that stretch reads PYANGDIHIGH. Position 563 (Glu563) interacts with L-isoleucyl-5'-AMP. The 'KMSKS' region signature appears at 605–609; the sequence is KMSKS. Residue Lys608 coordinates ATP. Zn(2+) contacts are provided by Cys892, Cys895, Cys912, and Cys915.

This sequence belongs to the class-I aminoacyl-tRNA synthetase family. IleS type 1 subfamily. As to quaternary structure, monomer. Requires Zn(2+) as cofactor.

The protein resides in the cytoplasm. It carries out the reaction tRNA(Ile) + L-isoleucine + ATP = L-isoleucyl-tRNA(Ile) + AMP + diphosphate. In terms of biological role, catalyzes the attachment of isoleucine to tRNA(Ile). As IleRS can inadvertently accommodate and process structurally similar amino acids such as valine, to avoid such errors it has two additional distinct tRNA(Ile)-dependent editing activities. One activity is designated as 'pretransfer' editing and involves the hydrolysis of activated Val-AMP. The other activity is designated 'posttransfer' editing and involves deacylation of mischarged Val-tRNA(Ile). This Neisseria meningitidis serogroup C / serotype 2a (strain ATCC 700532 / DSM 15464 / FAM18) protein is Isoleucine--tRNA ligase.